We begin with the raw amino-acid sequence, 194 residues long: Probable RNA 2'-phosphotransferase (194 aa).

It belongs to the KptA/TPT1 family.

In terms of biological role, removes the 2'-phosphate from RNA via an intermediate in which the phosphate is ADP-ribosylated by NAD followed by a presumed transesterification to release the RNA and generate ADP-ribose 1''-2''-cyclic phosphate (APPR&gt;P). May function as an ADP-ribosylase. This is Probable RNA 2'-phosphotransferase from Escherichia coli O45:K1 (strain S88 / ExPEC).